Here is a 384-residue protein sequence, read N- to C-terminus: Lipoyl synthase 2, chloroplastic (384 aa).

The N-terminal 48 residues, Met-1–Arg-48, are a transit peptide targeting the chloroplast. Cys-108, Cys-113, Cys-119, Cys-145, Cys-149, Cys-152, and Ser-360 together coordinate [4Fe-4S] cluster. One can recognise a Radical SAM core domain in the interval Gly-128 to Leu-349.

The protein belongs to the radical SAM superfamily. Lipoyl synthase family. [4Fe-4S] cluster is required as a cofactor.

It is found in the plastid. The protein resides in the chloroplast. It catalyses the reaction [[Fe-S] cluster scaffold protein carrying a second [4Fe-4S](2+) cluster] + N(6)-octanoyl-L-lysyl-[protein] + 2 oxidized [2Fe-2S]-[ferredoxin] + 2 S-adenosyl-L-methionine + 4 H(+) = [[Fe-S] cluster scaffold protein] + N(6)-[(R)-dihydrolipoyl]-L-lysyl-[protein] + 4 Fe(3+) + 2 hydrogen sulfide + 2 5'-deoxyadenosine + 2 L-methionine + 2 reduced [2Fe-2S]-[ferredoxin]. It functions in the pathway protein modification; protein lipoylation via endogenous pathway; protein N(6)-(lipoyl)lysine from octanoyl-[acyl-carrier-protein]: step 2/2. In terms of biological role, catalyzes the radical-mediated insertion of two sulfur atoms into the C-6 and C-8 positions of the octanoyl moiety bound to the lipoyl domains of lipoate-dependent enzymes, thereby converting the octanoylated domains into lipoylated derivatives. This is Lipoyl synthase 2, chloroplastic from Oryza sativa subsp. indica (Rice).